Reading from the N-terminus, the 594-residue chain is UV-stimulated scaffold protein A homolog (594 aa).

The segment at 24–170 (RKNLNRFIRE…VTLKKTKFVD (147 aa)) is VHS-like. Positions 170 to 198 (DYENGAKKIEAERKRKKILEERKMKMIEN) form a coiled coil. The segment at 466–493 (RKVCLAKMKSGKLCPRKDYYTCPLHGKI) adopts a UVSSA-type zinc-finger fold. Residues cysteine 469, cysteine 479, cysteine 487, and histidine 490 each contribute to the Zn(2+) site. The stretch at 503 to 540 (INEEDRLEENYRKEQNHLKEADKIRQMIEKEYESKTKR) forms a coiled coil. Positions 533-558 (EYESKTKRRKKHDVDTTASEDVRNRL) are disordered. Residues 544–558 (HDVDTTASEDVRNRL) are compositionally biased toward basic and acidic residues.

Belongs to the UVSSA family.

The protein resides in the chromosome. Factor involved in transcription-coupled nucleotide excision repair (TC-NER) in response to UV damage. TC-NER allows RNA polymerase II-blocking lesions to be rapidly removed from the transcribed strand of active genes. This Caenorhabditis elegans protein is UV-stimulated scaffold protein A homolog.